Consider the following 96-residue polypeptide: Large ribosomal subunit protein uL23 (96 aa).

Belongs to the universal ribosomal protein uL23 family. As to quaternary structure, part of the 50S ribosomal subunit. Contacts protein L29, and trigger factor when it is bound to the ribosome.

In terms of biological role, one of the early assembly proteins it binds 23S rRNA. One of the proteins that surrounds the polypeptide exit tunnel on the outside of the ribosome. Forms the main docking site for trigger factor binding to the ribosome. This chain is Large ribosomal subunit protein uL23, found in Thermus thermophilus (strain ATCC BAA-163 / DSM 7039 / HB27).